The following is a 191-amino-acid chain: MNYKDQLLKQMVDGKYDRKKYLNMYQRKYNLNSPKISTKPVTIDRARFLVKNKQENQTESSDLNNTDSLVDSNSDNQTNTTDTSTNNVENLNENVTEESTNDTNKDTNIETNNQTKILSPTKSFSPNKKVMDNVLKNQDKISDTERIRFLEEKVSKLERKIRTLSLQMTKISGRSNRFTDKSIKVGPKVYH.

Positions asparagine 52–asparagine 112 are disordered. Residues glutamine 57–valine 70 show a composition bias toward polar residues. Low complexity predominate over residues aspartate 71–asparagine 94. A coiled-coil region spans residues glutamine 138–serine 172.

This is an uncharacterized protein from Acanthamoeba polyphaga mimivirus (APMV).